The following is a 96-amino-acid chain: Toxin ParE1 (96 aa).

The protein belongs to the RelE toxin family. Forms a ParD1(2)-ParE1(2) heterotetramer.

Toxic component of a type II toxin-antitoxin (TA) system. Its toxic effect is neutralized by coexpression with cognate antitoxin ParD1 but no other ParD or RelB antitoxin. Low levels of wild-type toxin in the absence of antitoxin decreases the rate of cell growth, and results in death or loss of colony formation abilities and greatly elongated cells. Low levels of a mutant missing the last 4 residues leads to loss of cell division while cell elongation continues. This is Toxin ParE1 (parE1) from Caulobacter vibrioides (strain ATCC 19089 / CIP 103742 / CB 15) (Caulobacter crescentus).